The following is a 1007-amino-acid chain: Protocadherin alpha-C2 (1007 aa).

A signal peptide spans 1-42 (MEQAGTRPAATEHPRLRRPMPWLLLLPLLLLLLLLLPGPAAS). Cadherin domains follow at residues 43–148 (QLRY…SPRF), 149–257 (PRPN…SPAF), 258–365 (DQST…APEV), 374–469 (VPEN…PPSF), and 470–579 (LEDS…APHI). At 43–708 (QLRYSVPEEQ…RTYSEITLYL (666 aa)) the chain is on the extracellular side. N280 and N436 each carry an N-linked (GlcNAc...) asparagine glycan. N-linked (GlcNAc...) asparagine glycans are attached at residues N586 and N657. In terms of domain architecture, Cadherin 6 spans 594–691 (VPRTAPAGYL…DRVSKILPDT (98 aa)). A helical membrane pass occupies residues 709 to 729 (IIALSTVSFIFLLTIIILSII). Over 730–1007 (KCYRYTAYGT…GNSTTDNSDQ (278 aa)) the chain is Cytoplasmic. 4 PXXP repeats span residues 856 to 859 (PRQP), 889 to 892 (PGGP), 930 to 933 (PGNP), and 948 to 951 (PGSP). The 4 X 4 AA repeats of P-X-X-P stretch occupies residues 856-951 (PRQPNPDWRY…PDKFIIPGSP (96 aa)). Positions 885–1007 (LRAGPGGPDQ…GNSTTDNSDQ (123 aa)) are disordered. Basic and acidic residues predominate over residues 966–980 (DKSDFITFGKKEETK).

The protein resides in the cell membrane. In terms of biological role, potential calcium-dependent cell-adhesion protein. May be involved in the establishment and maintenance of specific neuronal connections in the brain. The polypeptide is Protocadherin alpha-C2 (PCDHAC2) (Homo sapiens (Human)).